A 335-amino-acid polypeptide reads, in one-letter code: Phospholipid scramblase 1 (335 aa).

The tract at residues 1-101 (MEKHGPPEHA…NHPGGPGGTP (101 aa)) is proline-rich domain (PRD). A disordered region spans residues 1 to 102 (MEKHGPPEHA…HPGGPGGTPW (102 aa)). Residues 1 to 305 (MEKHGPPEHA…IQFPLDLDVK (305 aa)) are Cytoplasmic-facing. Tandem repeats lie at residues 23 to 29 (QGPYPGP), 30 to 36 (QGPYPGP), 37 to 43 (QGPYAGP), 44 to 50 (QGPYPGP), 51 to 57 (QGPYAGP), and 58 to 64 (QGPYPGP). The tract at residues 23–71 (QGPYPGPQGPYPGPQGPYAGPQGPYPGPQGPYAGPQGPYPGPQPGYPVP) is 7 X 7 AA tandem repeats of Q-G-P-Y-[AP]-G-P. Over residues 26–37 (YPGPQGPYPGPQ) the composition is skewed to pro residues. A compositionally biased stretch (pro residues) spans 59-72 (GPYPGPQPGYPVPP). Residues 64-72 (PQPGYPVPP) carry the SH3-binding 1 motif. A 7; approximate repeat occupies 65 to 71 (QPGYPVP). Y91 is modified (phosphotyrosine; by ABL). The SH3-binding 2 motif lies at 101–109 (PWMQAPPPP). T178 carries the post-translational modification Phosphothreonine; by PKC/PRKCD. S-palmitoyl cysteine attachment occurs at residues C201, C202, C205, and C206. The Nuclear localization signal motif lies at 274–283 (GKISKQWSGF). The helical transmembrane segment at 306–322 (MKAVMLGACFLIDFMFF) threads the bilayer. The Extracellular portion of the chain corresponds to 323-335 (ERTGNEEQRSGVW).

This sequence belongs to the phospholipid scramblase family. As to quaternary structure, forms homooligomers in the presence of calcium. Interacts with ABL. Interacts with RELT, RELL1 and RELL2. Interacts with OXSR1 in the presence of RELT. Interacts with OCLN, TOP2A and TOP2B. Interacts with TRPC1, TRPC4 and TRPC5. Interacts with ILDR1. Ca(2+) serves as cofactor. Mg(2+) is required as a cofactor. Requires Zn(2+) as cofactor. In terms of processing, phosphorylated on tyrosine residues. Phosphorylated by OXSR1 in the presence of RELT. Phosphorylation at Thr-178 by PKC/PKCD increases its phospholipid scramblase activity during both cell stimulation and apoptosis. Post-translationally, palmitoylation is required for its phospholipid scramblase activity. Palmitoylation regulates its localization to the cell membrane or the nucleus; trafficking to the cell membrane is dependent upon palmitoylation whereas in the absence of palmitoylation, localizes to the nucleus.

The protein localises to the cell membrane. It is found in the nucleus. Its subcellular location is the cytoplasm. The protein resides in the perinuclear region. It catalyses the reaction a 1,2-diacyl-sn-glycero-3-phosphocholine(in) = a 1,2-diacyl-sn-glycero-3-phosphocholine(out). The catalysed reaction is a 1,2-diacyl-sn-glycero-3-phosphoethanolamine(in) = a 1,2-diacyl-sn-glycero-3-phosphoethanolamine(out). It carries out the reaction a 1,2-diacyl-sn-glycero-3-phospho-L-serine(in) = a 1,2-diacyl-sn-glycero-3-phospho-L-serine(out). Catalyzes calcium-induced ATP-independent rapid bidirectional and non-specific distribution of phospholipids (lipid scrambling or lipid flip-flop) between the inner and outer leaflet of the plasma membrane resulting in collapse of the phospholipid asymmetry which leads to phosphatidylserine externalization on the cell surface. Mediates calcium-dependent phosphatidylserine externalization and apoptosis in neurons via its association with TRPC5. Also exhibits magnesium-dependent nuclease activity against double-stranded DNA and RNA but not single-stranded DNA and can enhance DNA decatenation mediated by TOP2A. Negatively regulates FcR-mediated phagocytosis in differentiated macrophages. May contribute to cytokine-regulated cell proliferation and differentiation. This chain is Phospholipid scramblase 1 (Plscr1), found in Rattus norvegicus (Rat).